Consider the following 378-residue polypeptide: Anhydro-N-acetylmuramic acid kinase (378 aa).

22–29 (GTSLDGAD) serves as a coordination point for ATP.

This sequence belongs to the anhydro-N-acetylmuramic acid kinase family.

The enzyme catalyses 1,6-anhydro-N-acetyl-beta-muramate + ATP + H2O = N-acetyl-D-muramate 6-phosphate + ADP + H(+). It functions in the pathway amino-sugar metabolism; 1,6-anhydro-N-acetylmuramate degradation. Its pathway is cell wall biogenesis; peptidoglycan recycling. In terms of biological role, catalyzes the specific phosphorylation of 1,6-anhydro-N-acetylmuramic acid (anhMurNAc) with the simultaneous cleavage of the 1,6-anhydro ring, generating MurNAc-6-P. Is required for the utilization of anhMurNAc either imported from the medium or derived from its own cell wall murein, and thus plays a role in cell wall recycling. The protein is Anhydro-N-acetylmuramic acid kinase of Bordetella petrii (strain ATCC BAA-461 / DSM 12804 / CCUG 43448).